A 353-amino-acid chain; its full sequence is Ribosomal RNA large subunit methyltransferase M (353 aa).

S-adenosyl-L-methionine contacts are provided by residues Ser183, 216–219 (APGG), Asp235, Asp255, and Asp271. Lys300 functions as the Proton acceptor in the catalytic mechanism.

The protein belongs to the class I-like SAM-binding methyltransferase superfamily. RNA methyltransferase RlmE family. RlmM subfamily. Monomer.

The protein localises to the cytoplasm. The enzyme catalyses cytidine(2498) in 23S rRNA + S-adenosyl-L-methionine = 2'-O-methylcytidine(2498) in 23S rRNA + S-adenosyl-L-homocysteine + H(+). Catalyzes the 2'-O-methylation at nucleotide C2498 in 23S rRNA. This Azotobacter vinelandii (strain DJ / ATCC BAA-1303) protein is Ribosomal RNA large subunit methyltransferase M.